A 1000-amino-acid chain; its full sequence is Receptor-type tyrosine-protein kinase FLT3 (1000 aa).

Residues 1–27 (MRALAQRSDRRLLLLVVLSVMILETVT) form the signal peptide. At 28–544 (NQDLPVIKCV…PFPFIQDNIS (517 aa)) the chain is on the extracellular side. Disulfide bonds link C36/C66 and C104/C115. Residue N44 is glycosylated (N-linked (GlcNAc...) asparagine). The tract at residues 45-67 (GSSAGKPSSYRMVRGSPEDLQCT) is disordered. Residues N133 and N152 are each glycosylated (N-linked (GlcNAc...) asparagine). Disulfide bonds link C200-C207 and C273-C331. The Ig-like C2-type domain maps to 254–344 (PQSTLPQLFL…KHPSQSALVT (91 aa)). N-linked (GlcNAc...) asparagine glycans are attached at residues N307, N324, and N352. Intrachain disulfides connect C369–C408 and C382–C393. N-linked (GlcNAc...) asparagine glycans are attached at residues N445, N474, N503, and N542. The helical transmembrane segment at 545–564 (FYATIGLCLPFIVVLIVLIC) threads the bilayer. The Cytoplasmic segment spans residues 565–992 (HKYKKQFRYE…GSEPPSPQAQ (428 aa)). Y573 is modified (phosphotyrosine). Residue S575 is modified to Phosphoserine. 2 positions are modified to phosphotyrosine; by autocatalysis: Y590 and Y592. An important for normal regulation of the kinase activity and for maintaining the kinase in an inactive state in the absence of ligand binding region spans residues 592–598 (YVDFRDY). Residue Y600 is modified to Phosphotyrosine. Residues 611–946 (LEFGKVLGSG…PSFPNLTSFL (336 aa)) form the Protein kinase domain. ATP-binding positions include 617–625 (LGSGAFGRV) and K645. Y727 carries the phosphotyrosine; by autocatalysis modification. Residue S760 is modified to Phosphoserine. Y769 and Y796 each carry phosphotyrosine. Residue D814 is the Proton acceptor of the active site. Y845 is modified (phosphotyrosine; by autocatalysis). Y958 and Y972 each carry phosphotyrosine. The segment at 968-1000 (HPSIYQNRRPLSREAGSEPPSPQAQVKIHRERS) is disordered. Phosphoserine is present on S1000.

The protein belongs to the protein kinase superfamily. Tyr protein kinase family. CSF-1/PDGF receptor subfamily. Monomer in the absence of bound FLT3LG. Homodimer in the presence of bound FLT3LG. Interacts with FIZ1 following ligand activation. Interacts with FES, FER, LYN, FGR, HCK, SRC and GRB2. Interacts with PTPRJ/DEP-1 and PTPN11/SHP2. Interacts with RNF115 and RNF126. Post-translationally, N-glycosylated, contains complex N-glycans with sialic acid. Autophosphorylated on several tyrosine residues in response to FLT3LG binding. FLT3LG binding also increases phosphorylation of mutant kinases that are constitutively activated. Dephosphorylated by PTPRJ/DEP-1, PTPN1, PTPN6/SHP-1, and to a lesser degree by PTPN12. Dephosphorylation is important for export from the endoplasmic reticulum and location at the cell membrane. In terms of processing, rapidly ubiquitinated by UBE2L6 and the E3 ubiquitin-protein ligase SIAH1 after autophosphorylation, leading to its proteasomal degradation. Hematopoietic stem and progenitor cell-enriched populations. Found in brain, placenta and testis.

The protein resides in the membrane. It is found in the endoplasmic reticulum lumen. The catalysed reaction is L-tyrosyl-[protein] + ATP = O-phospho-L-tyrosyl-[protein] + ADP + H(+). Its activity is regulated as follows. Present in an inactive conformation in the absence of bound ligand. FLT3LG binding leads to dimerization and activation by autophosphorylation. In terms of biological role, tyrosine-protein kinase that acts as a cell-surface receptor for the cytokine FLT3LG and regulates differentiation, proliferation and survival of hematopoietic progenitor cells and of dendritic cells. Promotes phosphorylation of SHC1 and AKT1, and activation of the downstream effector MTOR. Promotes activation of RAS signaling and phosphorylation of downstream kinases, including MAPK1/ERK2 and/or MAPK3/ERK1. Promotes phosphorylation of FES, FER, PTPN6/SHP, PTPN11/SHP-2, PLCG1, and STAT5A and/or STAT5B. Activation of wild-type FLT3 causes only marginal activation of STAT5A or STAT5B. Mutations that cause constitutive kinase activity promote cell proliferation and resistance to apoptosis via the activation of multiple signaling pathways. The protein is Receptor-type tyrosine-protein kinase FLT3 (Flt3) of Mus musculus (Mouse).